The chain runs to 161 residues: MDTPKMGDLYQRIANQINEMIPSEWENVYLYAEILDDSSEVYFYFNIPGKNEFLYSHNIPEHFNVSEDIYDDLLIELQESFEELREEYEKNNPETWTNLTLKLDRTGQFSIDYNYEDVIASELNGSQRKAVWVYKNLGLMPKRKTVRDFLEDYIKTNEGKI.

Monomer. Interacts with the C-terminus of cognate toxin YeeF, probably with 2:2 stoichiometry. The second YezG molecules binds with lower affinity.

It is found in the cytoplasm. In terms of biological role, immunity component of an LXG toxin-immunity module. These modules promote kin selection, mediate competition in biofilms, and drive spatial segregation of different strains, indicating that LXG toxins may help avoid warfare between strains in biofilms. Neutralizes the toxic abilities of cognate toxin YeeF upon expression in E.coli and in vitro. The protein is Immunity protein YezG of Bacillus spizizenii (strain ATCC 23059 / NRRL B-14472 / W23) (Bacillus subtilis subsp. spizizenii).